We begin with the raw amino-acid sequence, 141 residues long: MAKKVANIVKLQIPAGKATPAPPVGPALGQAGINIMGFTKDFNARTADQAGMIIPVVITVYEDRSFDFVTKTPPAAVLLKKAAGVEHGSGEPNTKKVAKVTKDQVKEIAETKMQDLNAADVEAAMRMVEGTARSMGFEVEG.

The protein belongs to the universal ribosomal protein uL11 family. Part of the ribosomal stalk of the 50S ribosomal subunit. Interacts with L10 and the large rRNA to form the base of the stalk. L10 forms an elongated spine to which L12 dimers bind in a sequential fashion forming a multimeric L10(L12)X complex. One or more lysine residues are methylated.

Functionally, forms part of the ribosomal stalk which helps the ribosome interact with GTP-bound translation factors. This Lacticaseibacillus casei (strain BL23) (Lactobacillus casei) protein is Large ribosomal subunit protein uL11.